A 67-amino-acid polypeptide reads, in one-letter code: Large ribosomal subunit protein bL35 (67 aa).

The protein belongs to the bacterial ribosomal protein bL35 family.

In Methylorubrum populi (strain ATCC BAA-705 / NCIMB 13946 / BJ001) (Methylobacterium populi), this protein is Large ribosomal subunit protein bL35.